We begin with the raw amino-acid sequence, 208 residues long: Small ribosomal subunit protein eS1 (208 aa).

The protein belongs to the eukaryotic ribosomal protein eS1 family.

The chain is Small ribosomal subunit protein eS1 from Saccharolobus solfataricus (strain ATCC 35092 / DSM 1617 / JCM 11322 / P2) (Sulfolobus solfataricus).